Consider the following 146-residue polypeptide: Dihydroneopterin aldolase 1 (146 aa).

Substrate contacts are provided by residues glutamate 41, tyrosine 73, and leucine 92 to glutamate 93. Residue lysine 119 is the Proton donor/acceptor of the active site.

It belongs to the DHNA family. In terms of assembly, homooctamer. Forms a hollow cylinder assembled from two ring-shaped tetramers. As to expression, expressed in roots, leaves, stems and siliques.

The catalysed reaction is 7,8-dihydroneopterin = 6-hydroxymethyl-7,8-dihydropterin + glycolaldehyde. It participates in cofactor biosynthesis; tetrahydrofolate biosynthesis; 2-amino-4-hydroxy-6-hydroxymethyl-7,8-dihydropteridine diphosphate from 7,8-dihydroneopterin triphosphate: step 3/4. In terms of biological role, catalyzes the conversion of 7,8-dihydroneopterin into 6-hydroxymethyl-7,8-dihydropterin, a biosynthetic precursor of the vitamin tetrahydrofolate. Can use L-threo-dihydroneopterin and D-erythro-dihydroneopterin as substrates for the formation of 6-hydroxymethyldihydropterin, but it can also catalyze the epimerization of carbon 2' of dihydroneopterin and dihydromonapterin. In Arabidopsis thaliana (Mouse-ear cress), this protein is Dihydroneopterin aldolase 1.